The chain runs to 525 residues: Zinc finger protein 678 (525 aa).

14 C2H2-type zinc fingers span residues 97–119, 125–147, 153–175, 181–203, 209–231, 237–259, 265–287, 293–315, 321–343, 349–371, 377–399, 405–427, 433–455, and 461–483; these read FQCI…KRIH, YKCE…KRIH, YKCD…KKIH, YPCE…KRIH, YKCK…KRIH, YKCE…RRIH, YQCE…KRIH, and YKCK…RRIH. Residues 489 to 511 form a C2H2-type 15; degenerate zinc finger; sequence YKCKECGKGFYQSSIHSKYKRIY.

It belongs to the krueppel C2H2-type zinc-finger protein family.

The protein localises to the nucleus. May be involved in transcriptional regulation. The protein is Zinc finger protein 678 (ZNF678) of Homo sapiens (Human).